Reading from the N-terminus, the 155-residue chain is Gene 5 protein (155 aa).

The segment at 1 to 26 (MGTRGPIGKRDEERVRRNTPDSPTDT) is disordered. Residues 8–19 (GKRDEERVRRNT) are compositionally biased toward basic and acidic residues.

In Mycobacterium phage L5 (Mycobacteriophage L5), this protein is Gene 5 protein (5).